The primary structure comprises 186 residues: Ribosome rescue factor SmrB (186 aa).

Positions 99–174 (IDLHGLTQHQ…SDAAIIVIIE (76 aa)) constitute a Smr domain.

It belongs to the SmrB family. Associates with collided ribosomes, but not with correctly translating polysomes.

In terms of biological role, acts as a ribosome collision sensor. Detects stalled/collided disomes (pairs of ribosomes where the leading ribosome is stalled and a second ribosome has collided with it) and endonucleolytically cleaves mRNA at the 5' boundary of the stalled ribosome. Stalled/collided disomes form a new interface (primarily via the 30S subunits) that binds SmrB. Cleaved mRNA becomes available for tmRNA ligation, leading to ribosomal subunit dissociation and rescue of stalled ribosomes. The protein is Ribosome rescue factor SmrB of Buchnera aphidicola subsp. Acyrthosiphon pisum (strain Tuc7).